The following is a 355-amino-acid chain: Guanine nucleotide-binding protein alpha-12 subunit (355 aa).

Residues 28–355 (RQINLLLLGS…EQNLKTLMMQ (328 aa)) form the G-alpha domain. The interval 31–44 (NLLLLGSGESGKST) is G1 motif. GTP-binding positions include 36–43 (GSGESGKS), 176–182 (LFCRKAT), 201–205 (DVGGQ), 270–273 (NKND), and Ala-327. Mg(2+) is bound by residues Ser-43 and Thr-182. The interval 174–182 (DILFCRKAT) is G2 motif. The segment at 197-206 (FRFIDVGGQR) is G3 motif. Positions 266-273 (ILFMNKND) are G4 motif. Residues 325 to 330 (TTAVDT) are G5 motif.

Belongs to the G-alpha family. In terms of assembly, g proteins are composed of 3 units; alpha, beta and gamma. The alpha chain contains the guanine nucleotide binding site.

In terms of biological role, guanine nucleotide-binding proteins (G proteins) are involved as modulators or transducers in various transmembrane signaling systems. May play a role in resistance to fungal infection in the epidermis by regulating the up-regulation of several antimicrobial peptides of the NLP and CNC families. Upstream of plc-3, tpa-1 and the p38-like pathway, required for the expression of antimicrobial peptide nlp-29 in the epidermis in response to fungal infection or physical injury. In Caenorhabditis elegans, this protein is Guanine nucleotide-binding protein alpha-12 subunit (gpa-12).